Reading from the N-terminus, the 483-residue chain is Glutamyl-tRNA(Gln) amidotransferase subunit A (483 aa).

Residues Lys77 and Ser152 each act as charge relay system in the active site. Residue Ser176 is the Acyl-ester intermediate of the active site.

The protein belongs to the amidase family. GatA subfamily. In terms of assembly, heterotrimer of A, B and C subunits.

The enzyme catalyses L-glutamyl-tRNA(Gln) + L-glutamine + ATP + H2O = L-glutaminyl-tRNA(Gln) + L-glutamate + ADP + phosphate + H(+). Its function is as follows. Allows the formation of correctly charged Gln-tRNA(Gln) through the transamidation of misacylated Glu-tRNA(Gln) in organisms which lack glutaminyl-tRNA synthetase. The reaction takes place in the presence of glutamine and ATP through an activated gamma-phospho-Glu-tRNA(Gln). This chain is Glutamyl-tRNA(Gln) amidotransferase subunit A, found in Listeria monocytogenes serotype 4b (strain CLIP80459).